Here is an 885-residue protein sequence, read N- to C-terminus: Leucine--tRNA ligase (885 aa).

The short motif at 48–58 (PYPSGKLHMGH) is the 'HIGH' region element. A 'KMSKS' region motif is present at residues 639–643 (TMSKS). Lys642 contributes to the ATP binding site.

Belongs to the class-I aminoacyl-tRNA synthetase family.

It localises to the cytoplasm. It catalyses the reaction tRNA(Leu) + L-leucine + ATP = L-leucyl-tRNA(Leu) + AMP + diphosphate. The chain is Leucine--tRNA ligase from Bordetella avium (strain 197N).